Reading from the N-terminus, the 218-residue chain is MVGIIGRKLGMTTVFDETGNAIAVTVVEAGPCTVMQVRDNEKDGYNAIQLGYGAVKEKHLKKPQIGQFKKANLEPKKYLKEFRLDDSSAYTVGQELKVDIFQAGDFIDVSSLSKGRGFAGVMKRHNYDGGPMSHGSNFRRRAGSIGCNSYPARVWKGKGMPGHMGNTLTTIQNLKVVEIRPEDNLIMIKGSIPGAINGIVKITQAAKKKNKKKNSMTK.

This sequence belongs to the universal ribosomal protein uL3 family. In terms of assembly, part of the 50S ribosomal subunit. Forms a cluster with proteins L14 and L19.

In terms of biological role, one of the primary rRNA binding proteins, it binds directly near the 3'-end of the 23S rRNA, where it nucleates assembly of the 50S subunit. The chain is Large ribosomal subunit protein uL3 from Brachyspira pilosicoli (Serpulina pilosicoli).